The primary structure comprises 975 residues: Glycine dehydrogenase (decarboxylating) (975 aa).

Residue Lys-702 is modified to N6-(pyridoxal phosphate)lysine.

The protein belongs to the GcvP family. In terms of assembly, the glycine cleavage system is composed of four proteins: P, T, L and H. Pyridoxal 5'-phosphate serves as cofactor.

The catalysed reaction is N(6)-[(R)-lipoyl]-L-lysyl-[glycine-cleavage complex H protein] + glycine + H(+) = N(6)-[(R)-S(8)-aminomethyldihydrolipoyl]-L-lysyl-[glycine-cleavage complex H protein] + CO2. Its function is as follows. The glycine cleavage system catalyzes the degradation of glycine. The P protein binds the alpha-amino group of glycine through its pyridoxal phosphate cofactor; CO(2) is released and the remaining methylamine moiety is then transferred to the lipoamide cofactor of the H protein. The chain is Glycine dehydrogenase (decarboxylating) from Xanthomonas campestris pv. campestris (strain 8004).